The chain runs to 68 residues: MPKHEFSVDMTCGGCAEAVSRVLNKLGGVKYDIDLPNKKVCIESEHSMDTLLATLKKTGKTVSYLGLE.

Residues 1–63 form the HMA domain; that stretch reads MPKHEFSVDM…TLKKTGKTVS (63 aa). Cu cation is bound by residues C12 and C15. A Phosphoserine modification is found at S47. K60 bears the N6-acetyllysine mark.

The protein belongs to the ATX1 family. As to quaternary structure, homodimer. Interacts with ATP7B. Interacts with ATP7A. Interacts (via dimer form) with SLC31A1 (via C-terminal domain); this interaction improves ATOX1 stability and controls intracellular Cu(I) levels. As to expression, ubiquitous.

In terms of biological role, binds and deliver cytosolic copper to the copper ATPase proteins. May be important in cellular antioxidant defense. The protein is Copper transport protein ATOX1 of Homo sapiens (Human).